The following is a 291-amino-acid chain: Fructose-1,6-bisphosphatase class 1 1 (291 aa).

Mg(2+)-binding residues include glutamate 78, aspartate 95, leucine 97, and aspartate 98. Substrate is bound by residues 98 to 101, tyrosine 203, and lysine 233; that span reads DGSS. Glutamate 239 contacts Mg(2+).

Belongs to the FBPase class 1 family. Homotetramer. Requires Mg(2+) as cofactor.

Its subcellular location is the cytoplasm. The enzyme catalyses beta-D-fructose 1,6-bisphosphate + H2O = beta-D-fructose 6-phosphate + phosphate. It functions in the pathway carbohydrate biosynthesis; gluconeogenesis. This chain is Fructose-1,6-bisphosphatase class 1 1, found in Haloarcula marismortui (strain ATCC 43049 / DSM 3752 / JCM 8966 / VKM B-1809) (Halobacterium marismortui).